We begin with the raw amino-acid sequence, 491 residues long: Cytochrome P450 2F5 (491 aa).

Position 436 (cysteine 436) interacts with heme.

The protein belongs to the cytochrome P450 family. It depends on heme as a cofactor.

The protein resides in the endoplasmic reticulum membrane. Its subcellular location is the microsome membrane. The enzyme catalyses an organic molecule + reduced [NADPH--hemoprotein reductase] + O2 = an alcohol + oxidized [NADPH--hemoprotein reductase] + H2O + H(+). In terms of biological role, cytochromes P450 are a group of heme-thiolate monooxygenases. In liver microsomes, this enzyme is involved in an NADPH-dependent electron transport pathway. It oxidizes a variety of structurally unrelated compounds, including steroids, fatty acids, and xenobiotics. The polypeptide is Cytochrome P450 2F5 (CYP2F5) (Gorilla gorilla gorilla (Western lowland gorilla)).